Consider the following 1036-residue polypeptide: Ephrin type-A receptor 6 (1036 aa).

The signal sequence occupies residues 1–22; that stretch reads MGGCEVREFLLQFGFFLPLLTA. Residues 23–550 are Extracellular-facing; that stretch reads WPGDCSHVSN…MAAEQGQILV (528 aa). Residues 34-212 enclose the Eph LBD domain; sequence QVVLLDTTTV…FYKKCPFTVR (179 aa). Fibronectin type-III domains are found at residues 331–441 and 442–537; these read PPSA…TDQD and APSL…TGDE. Residues Asn343, Asn397, and Asn410 are each glycosylated (N-linked (GlcNAc...) asparagine). Residues 551-571 traverse the membrane as a helical segment; sequence IATAAVGGFTLLVILTLFFLI. Over 572–1036 the chain is Cytoplasmic; sequence TGRCQWYIKA…MHIQEKGFHV (465 aa). 2 positions are modified to phosphotyrosine; by autocatalysis: Tyr606 and Tyr612. One can recognise a Protein kinase domain in the interval 631-944; that stretch reads IRIERVIGAG…RNPSALHTLV (314 aa). Residues 637–645 and Lys663 contribute to the ATP site; that span reads IGAGEFGEV. The Proton acceptor role is filled by Asp798. A phosphotyrosine; by autocatalysis mark is found at Tyr831 and Tyr978. One can recognise an SAM domain in the interval 961 to 1025; the sequence is PLFVTVGDWL…VSSIQTLRLH (65 aa). The PDZ-binding motif lies at 1034–1036; sequence FHV.

It belongs to the protein kinase superfamily. Tyr protein kinase family. Ephrin receptor subfamily. In terms of assembly, heterotetramer upon binding of the ligand. The heterotetramer is composed of an ephrin dimer and a receptor dimer. Oligomerization is probably required to induce biological responses. Interacts (via SAM domain) with ANKS1A (via SAM domain). Expressed in brain and testis.

The protein localises to the membrane. The enzyme catalyses L-tyrosyl-[protein] + ATP = O-phospho-L-tyrosyl-[protein] + ADP + H(+). In terms of biological role, receptor tyrosine kinase which binds promiscuously GPI-anchored ephrin-A family ligands residing on adjacent cells, leading to contact-dependent bidirectional signaling into neighboring cells. The signaling pathway downstream of the receptor is referred to as forward signaling while the signaling pathway downstream of the ephrin ligand is referred to as reverse signaling. This Homo sapiens (Human) protein is Ephrin type-A receptor 6 (EPHA6).